The primary structure comprises 471 residues: Glutamate--tRNA ligase (471 aa).

A 'HIGH' region motif is present at residues 9-19 (PSPTGYLHVGG). Zn(2+)-binding residues include C98, C100, C125, and H127. Residues 237 to 241 (KLSKR) carry the 'KMSKS' region motif. An ATP-binding site is contributed by K240.

It belongs to the class-I aminoacyl-tRNA synthetase family. Glutamate--tRNA ligase type 1 subfamily. In terms of assembly, monomer. Zn(2+) serves as cofactor.

It is found in the cytoplasm. The enzyme catalyses tRNA(Glu) + L-glutamate + ATP = L-glutamyl-tRNA(Glu) + AMP + diphosphate. In terms of biological role, catalyzes the attachment of glutamate to tRNA(Glu) in a two-step reaction: glutamate is first activated by ATP to form Glu-AMP and then transferred to the acceptor end of tRNA(Glu). The polypeptide is Glutamate--tRNA ligase (Escherichia coli O157:H7).